Here is a 391-residue protein sequence, read N- to C-terminus: S-adenosylmethionine synthase 5 (391 aa).

Position 9 (Glu-9) interacts with Mg(2+). Residue His-15 participates in ATP binding. Glu-43 is a K(+) binding site. 2 residues coordinate L-methionine: Glu-56 and Gln-99. Residues 167–169, 235–238, Asp-246, 252–253, Ala-269, Lys-273, and Lys-277 each bind ATP; these read DGK, SGRF, and RK. Residue Asp-246 participates in L-methionine binding. An L-methionine-binding site is contributed by Lys-277.

Belongs to the AdoMet synthase family. As to quaternary structure, homotetramer. The cofactor is Mn(2+). Requires Mg(2+) as cofactor. Co(2+) serves as cofactor. It depends on K(+) as a cofactor.

Its subcellular location is the cytoplasm. The catalysed reaction is L-methionine + ATP + H2O = S-adenosyl-L-methionine + phosphate + diphosphate. Its pathway is amino-acid biosynthesis; S-adenosyl-L-methionine biosynthesis; S-adenosyl-L-methionine from L-methionine: step 1/1. Functionally, catalyzes the formation of S-adenosylmethionine from methionine and ATP. The reaction comprises two steps that are both catalyzed by the same enzyme: formation of S-adenosylmethionine (AdoMet) and triphosphate, and subsequent hydrolysis of the triphosphate. The polypeptide is S-adenosylmethionine synthase 5 (METK5) (Vitis vinifera (Grape)).